Consider the following 293-residue polypeptide: Ribosomal protein L11 methyltransferase (293 aa).

S-adenosyl-L-methionine-binding residues include T146, G167, D189, and N230.

It belongs to the methyltransferase superfamily. PrmA family.

It is found in the cytoplasm. It catalyses the reaction L-lysyl-[protein] + 3 S-adenosyl-L-methionine = N(6),N(6),N(6)-trimethyl-L-lysyl-[protein] + 3 S-adenosyl-L-homocysteine + 3 H(+). Its function is as follows. Methylates ribosomal protein L11. This Colwellia psychrerythraea (strain 34H / ATCC BAA-681) (Vibrio psychroerythus) protein is Ribosomal protein L11 methyltransferase.